The primary structure comprises 338 residues: Cytosolic sulfotransferase 16 (338 aa).

Position 81–86 (Lys-81–Trp-86) interacts with 3'-phosphoadenylyl sulfate. The Proton acceptor role is filled by His-143. Residues Arg-165, Ser-173, Tyr-231, and Arg-301–Gly-303 contribute to the 3'-phosphoadenylyl sulfate site.

This sequence belongs to the sulfotransferase 1 family. Highly expressed in roots, stems and mature leaves. Low expression in young leaves and flowers. Barely detected in siliques.

Its subcellular location is the cytoplasm. The catalysed reaction is (Z)-desulfoglucotropeolin + 3'-phosphoadenylyl sulfate = (Z)-glucotropeolin + adenosine 3',5'-bisphosphate + H(+). The enzyme catalyses (Z)-indolylmethyl desulfoglucosinolate + 3'-phosphoadenylyl sulfate = (Z)-glucobrassicin + adenosine 3',5'-bisphosphate + H(+). Inhibited by phosphoadenosine 5'-phosphate (PAP). Its function is as follows. Sulfotransferase that utilizes 3'-phospho-5'-adenylyl sulfate (PAPS) as sulfonate donor to catalyze the sulfate conjugation of desulfo-glucosinolates (dsGSs), the final step in the biosynthesis of the glucosinolate core structure. Substrate preference is desulfo-2-phenylethyl glucosinolate &gt; desulfo-indol-3-yl methyl glucosinolate &gt; desulfo-benzyl glucosinolate &gt; desulfo-6-methylthiohexyl glucosinolate &gt; desulfo-4-methylthiobutyl glucosinolate &gt; desulfo-3-methylthiopropyl glucosinolate &gt; desulfo-singrin &gt; desulfo-3-butenyl glucosinolate. The chain is Cytosolic sulfotransferase 16 (SOT16) from Arabidopsis thaliana (Mouse-ear cress).